We begin with the raw amino-acid sequence, 358 residues long: Spermatogenesis-associated protein 22 (358 aa).

Composition is skewed to polar residues over residues Met-1–Ser-12, Gln-30–Gly-51, Pro-81–Arg-121, and Gln-150–Glu-159. Disordered regions lie at residues Met-1–Gly-51, Pro-81–Thr-122, and Gln-150–Pro-172.

In terms of assembly, component of a multiprotein complex with MEIOB and RPA2. Interacts with MEIOB. Interacts with the complex BRME1:HSF2BP:BRCA2. In terms of tissue distribution, specifically expressed in gonadal germ cells, when male and female germ cells progress through prophase of meiosis I.

The protein resides in the chromosome. Meiosis-specific protein required for homologous recombination in meiosis I. This Mus musculus (Mouse) protein is Spermatogenesis-associated protein 22.